The sequence spans 212 residues: Pyridoxine/pyridoxamine 5'-phosphate oxidase (212 aa).

Substrate-binding positions include 8 to 11 (RREY) and lysine 66. FMN is bound by residues 61-66 (RIVLLK), 76-77 (FT), arginine 82, lysine 83, and glutamine 105. 3 residues coordinate substrate: tyrosine 123, arginine 127, and serine 131. FMN contacts are provided by residues 140–141 (QS) and tryptophan 185. 191 to 193 (RLH) is a binding site for substrate. An FMN-binding site is contributed by arginine 195.

The protein belongs to the pyridoxamine 5'-phosphate oxidase family. In terms of assembly, homodimer. Requires FMN as cofactor.

It catalyses the reaction pyridoxamine 5'-phosphate + O2 + H2O = pyridoxal 5'-phosphate + H2O2 + NH4(+). The enzyme catalyses pyridoxine 5'-phosphate + O2 = pyridoxal 5'-phosphate + H2O2. It participates in cofactor metabolism; pyridoxal 5'-phosphate salvage; pyridoxal 5'-phosphate from pyridoxamine 5'-phosphate: step 1/1. The protein operates within cofactor metabolism; pyridoxal 5'-phosphate salvage; pyridoxal 5'-phosphate from pyridoxine 5'-phosphate: step 1/1. In terms of biological role, catalyzes the oxidation of either pyridoxine 5'-phosphate (PNP) or pyridoxamine 5'-phosphate (PMP) into pyridoxal 5'-phosphate (PLP). The chain is Pyridoxine/pyridoxamine 5'-phosphate oxidase from Shewanella denitrificans (strain OS217 / ATCC BAA-1090 / DSM 15013).